The chain runs to 295 residues: ATP synthase gamma chain (295 aa).

This sequence belongs to the ATPase gamma chain family. As to quaternary structure, F-type ATPases have 2 components, CF(1) - the catalytic core - and CF(0) - the membrane proton channel. CF(1) has five subunits: alpha(3), beta(3), gamma(1), delta(1), epsilon(1). CF(0) has three main subunits: a, b and c.

Its subcellular location is the cell inner membrane. Produces ATP from ADP in the presence of a proton gradient across the membrane. The gamma chain is believed to be important in regulating ATPase activity and the flow of protons through the CF(0) complex. This is ATP synthase gamma chain from Paraburkholderia phymatum (strain DSM 17167 / CIP 108236 / LMG 21445 / STM815) (Burkholderia phymatum).